Here is a 507-residue protein sequence, read N- to C-terminus: ATP synthase subunit alpha, chloroplastic (507 aa).

170–177 (GDRQTGKT) is a binding site for ATP. The residue at position 257 (T257) is a Phosphothreonine.

The protein belongs to the ATPase alpha/beta chains family. In terms of assembly, F-type ATPases have 2 components, CF(1) - the catalytic core - and CF(0) - the membrane proton channel. CF(1) has five subunits: alpha(3), beta(3), gamma(1), delta(1), epsilon(1). CF(0) has four main subunits: a, b, b' and c.

Its subcellular location is the plastid. The protein localises to the chloroplast thylakoid membrane. The enzyme catalyses ATP + H2O + 4 H(+)(in) = ADP + phosphate + 5 H(+)(out). Produces ATP from ADP in the presence of a proton gradient across the membrane. The alpha chain is a regulatory subunit. This chain is ATP synthase subunit alpha, chloroplastic, found in Lobularia maritima (Sweet alyssum).